Here is a 408-residue protein sequence, read N- to C-terminus: Putative F-box protein At1g53550 (408 aa).

In terms of domain architecture, F-box spans 29–74 (TCYFDPIPVDLVINILSRLSLECIARCRCVSKLWSSIIRRPNYNQL).

The chain is Putative F-box protein At1g53550 from Arabidopsis thaliana (Mouse-ear cress).